A 382-amino-acid chain; its full sequence is MKSLSILGSTGSIGLSTLDVVRRHPERFSIAALAEGHDVEMLLKQIDEFRPSLVSVRDEASRERLKGMLGDHKPEILCGLEGAAEVAAVDGADMVVSAIVGAAGLVPTVRAIEAGKDIALANKETLVVAGQLVSDLVKKHDVKLLPVDSEHSAIFQSLVGHRTEDIERIILTASGGPFRKTPAEELKNVGPEQALKHPQWSMGAKITIDSATLMNKGLEVIEAHWLFDMPAEKIGVVVHPQSIIHSMVEYIDGCVIAQLGVPDMRAPIAYALAWPERCETGIGKLDLTKVATLTFEEPDMERFPALRLAFDALKAGQTYPAVLNAANEIAVAAFLDKKIGFTDIAGTVDKTMQAHEAWTPITLEEYLQADKWARETARQLIG.

NADPH-binding residues include Thr10, Gly11, Ser12, Ile13, Gly36, and Asn122. Lys123 serves as a coordination point for 1-deoxy-D-xylulose 5-phosphate. Glu124 is an NADPH binding site. Mn(2+) is bound at residue Asp148. Ser149, Glu150, Ser174, and His197 together coordinate 1-deoxy-D-xylulose 5-phosphate. A Mn(2+)-binding site is contributed by Glu150. Residue Gly203 coordinates NADPH. The 1-deoxy-D-xylulose 5-phosphate site is built by Ser210, Asn215, Lys216, and Glu219. Position 219 (Glu219) interacts with Mn(2+).

The protein belongs to the DXR family. It depends on Mg(2+) as a cofactor. The cofactor is Mn(2+).

The enzyme catalyses 2-C-methyl-D-erythritol 4-phosphate + NADP(+) = 1-deoxy-D-xylulose 5-phosphate + NADPH + H(+). Its pathway is isoprenoid biosynthesis; isopentenyl diphosphate biosynthesis via DXP pathway; isopentenyl diphosphate from 1-deoxy-D-xylulose 5-phosphate: step 1/6. Functionally, catalyzes the NADPH-dependent rearrangement and reduction of 1-deoxy-D-xylulose-5-phosphate (DXP) to 2-C-methyl-D-erythritol 4-phosphate (MEP). The chain is 1-deoxy-D-xylulose 5-phosphate reductoisomerase from Chlorobaculum tepidum (strain ATCC 49652 / DSM 12025 / NBRC 103806 / TLS) (Chlorobium tepidum).